A 295-amino-acid polypeptide reads, in one-letter code: CBY1-interacting BAR domain-containing protein 1 (295 aa).

The N-terminal 49 residues, 1–49 (MMSRTPDARARDTQTKQIQENITSVEKHFGDLCQLFAAYVRKTARLRDK), are a transit peptide targeting the mitochondrion. The BAR-like stretch occupies residues 12-222 (DTQTKQIQEN…NVDEEGDLEV (211 aa)). Residues 111-185 (KREDLKQTQS…KQKIRDIKKV (75 aa)) adopt a coiled-coil conformation. Residues 243-265 (SKLSLNRTGTSMSKSGTMQSRTS) are compositionally biased toward polar residues. A disordered region spans residues 243–295 (SKLSLNRTGTSMSKSGTMQSRTSSRQRKRDDEEDEEEDDEDEDDLEEVTDDEH). A compositionally biased stretch (acidic residues) spans 273–295 (DEEDEEEDDEDEDDLEEVTDDEH).

The protein belongs to the CIBAR family.

It is found in the cytoplasm. The protein resides in the cytoskeleton. The protein localises to the microtubule organizing center. Its subcellular location is the centrosome. It localises to the centriole. It is found in the cell projection. The protein resides in the cilium. The protein localises to the nucleus. Its subcellular location is the mitochondrion inner membrane. It localises to the flagellum. In terms of biological role, plays a critical role in regulating mitochondrial ultrastructure and function by maintaining the integrity of mitochondrial morphology, particularly the organization of cristae. Plays a crucial role in ciliogenesis. Plays a key role in the correct positioning of the annulus, a septin-based ring structure in the sperm flagellum, serving both as a physical barrier and a membrane diffusion barrier that separates the midpiece (MP) from the principal piece (PP). This is CBY1-interacting BAR domain-containing protein 1 (cibar1) from Danio rerio (Zebrafish).